A 275-amino-acid polypeptide reads, in one-letter code: Glucosamine-6-phosphate deaminase 2 (275 aa).

Asp72 (proton acceptor; for enolization step) is an active-site residue. Residues Asn102–Ile131 are a coiled coil. Asp141 functions as the For ring-opening step in the catalytic mechanism. Residue His143 is the Proton acceptor; for ring-opening step of the active site. Glu148 serves as the catalytic For ring-opening step.

Belongs to the glucosamine/galactosamine-6-phosphate isomerase family. In terms of assembly, homohexamer.

It is found in the cytoplasm. The catalysed reaction is alpha-D-glucosamine 6-phosphate + H2O = beta-D-fructose 6-phosphate + NH4(+). Catalyzes the reversible conversion of alpha-D-glucosamine 6-phosphate (GlcN-6P) into beta-D-fructose 6-phosphate (Fru-6P) and ammonium ion, a regulatory reaction step in de novo uridine diphosphate-N-acetyl-alpha-D-glucosamine (UDP-GlcNAc) biosynthesis via hexosamine pathway. This is Glucosamine-6-phosphate deaminase 2 from Xenopus laevis (African clawed frog).